The chain runs to 321 residues: Glucokinase (321 aa).

Residue 8-13 (ADIGGT) participates in ATP binding.

This sequence belongs to the bacterial glucokinase family.

It localises to the cytoplasm. It catalyses the reaction D-glucose + ATP = D-glucose 6-phosphate + ADP + H(+). This is Glucokinase from Photorhabdus laumondii subsp. laumondii (strain DSM 15139 / CIP 105565 / TT01) (Photorhabdus luminescens subsp. laumondii).